The primary structure comprises 362 residues: Glutaminase-asparaginase (362 aa).

Residues 1-25 form the signal peptide; the sequence is MNAALKTFAPSALALLLILPSSASA. The Asparaginase/glutaminase domain maps to 35 to 362; that stretch reads ANVVILATGG…KELQRIFWEY (328 aa). The active-site Acyl-ester intermediate is T45. Substrate-binding positions include S92 and 125–126; that span reads TD.

Belongs to the asparaginase 1 family. In terms of assembly, homotetramer.

The protein localises to the periplasm. It catalyses the reaction L-glutamine + H2O = L-glutamate + NH4(+). It carries out the reaction L-asparagine + H2O = L-aspartate + NH4(+). The chain is Glutaminase-asparaginase (ansB) from Pseudomonas putida (strain ATCC 47054 / DSM 6125 / CFBP 8728 / NCIMB 11950 / KT2440).